The sequence spans 1572 residues: Multiple epidermal growth factor-like domains protein 6 (1572 aa).

Residues 1-26 (MPVGVEARASWRVVALTLLLLPAVPA) form the signal peptide. In terms of domain architecture, EMI spans 40-121 (MPHVCAEQKL…QKPGQEGCLS (82 aa)). Cystine bridges form between cysteine 44–cysteine 107, cysteine 73–cysteine 79, cysteine 106–cysteine 119, cysteine 126–cysteine 137, cysteine 133–cysteine 146, cysteine 148–cysteine 161, cysteine 167–cysteine 178, cysteine 174–cysteine 187, cysteine 189–cysteine 202, cysteine 291–cysteine 302, cysteine 298–cysteine 311, cysteine 313–cysteine 326, cysteine 418–cysteine 429, cysteine 425–cysteine 438, cysteine 440–cysteine 453, cysteine 522–cysteine 535, cysteine 529–cysteine 542, cysteine 544–cysteine 553, cysteine 566–cysteine 578, cysteine 572–cysteine 585, cysteine 587–cysteine 596, cysteine 609–cysteine 621, cysteine 615–cysteine 628, cysteine 630–cysteine 639, cysteine 788–cysteine 797, cysteine 791–cysteine 804, cysteine 806–cysteine 815, cysteine 832–cysteine 840, cysteine 834–cysteine 847, cysteine 849–cysteine 858, cysteine 871–cysteine 884, cysteine 875–cysteine 891, cysteine 893–cysteine 902, cysteine 915–cysteine 927, cysteine 921–cysteine 934, and cysteine 936–cysteine 945. In terms of domain architecture, EGF-like 1; calcium-binding spans 122-162 (DVDECANANGGCEGPCCNTVGGFYCRCPPGYQLQGDGKTCQ). Residues 163 to 203 (DVDECRSHNGGCQHRCVNTPGSYLCECKPGFRLHTDGRTCL) enclose the EGF-like 2; calcium-binding domain. One can recognise an EGF-like 3; calcium-binding domain in the interval 287–327 (DVDECALGLAQCAHGCLNTQGSFKCVCHAGYELGADGRQCY). The 41-residue stretch at 414–454 (DVDECASGHSGCEHHCSNLAGSFQCFCEAGYRLDEDRRGCT) folds into the EGF-like 4; calcium-binding domain. 17 consecutive EGF-like domains span residues 518-554 (FGHDCSLTCDDCRNGGTCFPGLDGCDCPEGWTGIICN), 562-597 (FGKNCSSPCICQNGGTCDPVSGACRCPPGVSGAHCE), 605-640 (YGKHCRKKCHCANRGRCHRLYGACLCDPGLYGRFCH), 785-816 (QEICPACEHGASCDPETGTCLCLPGFVGSRCQ), 829-859 (QMRCACANDGHCHPATGRCSCAPGWTGLSCQ), 867-903 (WGPDCIHPCNCSAGHGNCDAVSGLCLCEAGYEGPQCE), 911-946 (FGPGCEQKCRCEHGATCDHVSGACTCPAGWRGSFCE), 997-1032 (FGLNCSQICTCFNGASCDPVLGQCHCAPGWMGPTCL), 1040-1075 (YGKNCQHSCLCRNGGSCDPILGQCTCPEGWTGLACE), 1083-1118 (HGAGCRLNCSCLNGGTCDRLTGHCRCPAGWTGDKCQ), 1131-1161 (EEHCACRKGATCHHVTGACLCPPGWRGSHCE), 1169-1204 (FGEACAQRCHCPPGASCHHVSGECHCPPGFTGPGCE), 1256-1291 (YGPGCEQICKCLNGGTCDPATGACYCPAGFLGADCS), 1299-1334 (FGPSCAHVCTCGQGAACDPVSGTCICPPGKTGGHCE), 1342-1377 (FGKGCEHKCACRNGGLCHATNGSCSCPLGWMGPHCE), 1390-1420 (LLECSCQNNGSCEPTSGACLCGPGFYGQACE), and 1428-1463 (HGSGCQRVCECQQGAPCDPVSGRCLCPAGFRGQFCE). A glycan (N-linked (GlcNAc...) asparagine) is linked at asparagine 1000. 30 cysteine pairs are disulfide-bonded: cysteine 1001-cysteine 1013, cysteine 1007-cysteine 1020, cysteine 1022-cysteine 1031, cysteine 1044-cysteine 1056, cysteine 1050-cysteine 1063, cysteine 1065-cysteine 1074, cysteine 1087-cysteine 1099, cysteine 1093-cysteine 1106, cysteine 1108-cysteine 1117, cysteine 1134-cysteine 1142, cysteine 1136-cysteine 1149, cysteine 1151-cysteine 1160, cysteine 1173-cysteine 1185, cysteine 1177-cysteine 1192, cysteine 1194-cysteine 1203, cysteine 1260-cysteine 1272, cysteine 1266-cysteine 1279, cysteine 1281-cysteine 1290, cysteine 1303-cysteine 1315, cysteine 1309-cysteine 1322, cysteine 1324-cysteine 1333, cysteine 1346-cysteine 1358, cysteine 1352-cysteine 1365, cysteine 1367-cysteine 1376, cysteine 1393-cysteine 1401, cysteine 1395-cysteine 1408, cysteine 1410-cysteine 1419, cysteine 1432-cysteine 1444, cysteine 1438-cysteine 1451, and cysteine 1453-cysteine 1462.

It is found in the secreted. This Mus musculus (Mouse) protein is Multiple epidermal growth factor-like domains protein 6 (Megf6).